The following is a 273-amino-acid chain: Large ribosomal subunit protein uL2 (273 aa).

A disordered region spans residues 221–262; that stretch reads RGTAMNPVDHPHGGGEGRNFGKHPVTPWGVQTKGKKTRHNKR. The segment covering 253–262 has biased composition (basic residues); it reads KGKKTRHNKR.

This sequence belongs to the universal ribosomal protein uL2 family. Part of the 50S ribosomal subunit. Forms a bridge to the 30S subunit in the 70S ribosome.

In terms of biological role, one of the primary rRNA binding proteins. Required for association of the 30S and 50S subunits to form the 70S ribosome, for tRNA binding and peptide bond formation. It has been suggested to have peptidyltransferase activity; this is somewhat controversial. Makes several contacts with the 16S rRNA in the 70S ribosome. This chain is Large ribosomal subunit protein uL2, found in Aggregatibacter actinomycetemcomitans (Actinobacillus actinomycetemcomitans).